The primary structure comprises 233 residues: Large ribosomal subunit protein uL1 (233 aa).

It belongs to the universal ribosomal protein uL1 family. In terms of assembly, part of the 50S ribosomal subunit.

Binds directly to 23S rRNA. The L1 stalk is quite mobile in the ribosome, and is involved in E site tRNA release. Its function is as follows. Protein L1 is also a translational repressor protein, it controls the translation of the L11 operon by binding to its mRNA. In Brucella anthropi (strain ATCC 49188 / DSM 6882 / CCUG 24695 / JCM 21032 / LMG 3331 / NBRC 15819 / NCTC 12168 / Alc 37) (Ochrobactrum anthropi), this protein is Large ribosomal subunit protein uL1.